Reading from the N-terminus, the 360-residue chain is Peptide chain release factor 1 (360 aa).

Residue glutamine 235 is modified to N5-methylglutamine. Residues 284–293 (QRRQQEESST) show a composition bias toward basic and acidic residues. The interval 284–311 (QRRQQEESSTRRNLLGSGDRSDRIRTYN) is disordered.

Belongs to the prokaryotic/mitochondrial release factor family. Methylated by PrmC. Methylation increases the termination efficiency of RF1.

The protein localises to the cytoplasm. Functionally, peptide chain release factor 1 directs the termination of translation in response to the peptide chain termination codons UAG and UAA. This Sodalis glossinidius (strain morsitans) protein is Peptide chain release factor 1.